The chain runs to 98 residues: MAEEEPISVDYEVFGKVQGVFFRKYTQAEGNRLGLVGWVRNTDTGTVTGQLQGPSEKVREMQIWLQKKGSPKSRITKAQFQNERRIKKLEHSTFSICK.

In terms of domain architecture, Acylphosphatase-like spans 8–98 (SVDYEVFGKV…LEHSTFSICK (91 aa)). Active-site residues include Arg23 and Asn41.

The protein belongs to the acylphosphatase family.

The catalysed reaction is an acyl phosphate + H2O = a carboxylate + phosphate + H(+). The protein is Acylphosphatase-1 (acyp1) of Xenopus tropicalis (Western clawed frog).